A 290-amino-acid chain; its full sequence is Thymidylate synthase (290 aa).

Arginine 31 contributes to the dUMP binding site. Position 61 (histidine 61) interacts with (6R)-5,10-methylene-5,6,7,8-tetrahydrofolate. DUMP is bound at residue 152–153 (RR). The active-site Nucleophile is cysteine 172. DUMP-binding positions include 192–195 (RSAD), asparagine 203, and 233–235 (HIY). Residue aspartate 195 coordinates (6R)-5,10-methylene-5,6,7,8-tetrahydrofolate. A (6R)-5,10-methylene-5,6,7,8-tetrahydrofolate-binding site is contributed by alanine 289.

It belongs to the thymidylate synthase family. Bacterial-type ThyA subfamily. Homodimer.

Its subcellular location is the cytoplasm. It catalyses the reaction dUMP + (6R)-5,10-methylene-5,6,7,8-tetrahydrofolate = 7,8-dihydrofolate + dTMP. Its pathway is pyrimidine metabolism; dTTP biosynthesis. Functionally, catalyzes the reductive methylation of 2'-deoxyuridine-5'-monophosphate (dUMP) to 2'-deoxythymidine-5'-monophosphate (dTMP) while utilizing 5,10-methylenetetrahydrofolate (mTHF) as the methyl donor and reductant in the reaction, yielding dihydrofolate (DHF) as a by-product. This enzymatic reaction provides an intracellular de novo source of dTMP, an essential precursor for DNA biosynthesis. The sequence is that of Thymidylate synthase from Psychrobacter cryohalolentis (strain ATCC BAA-1226 / DSM 17306 / VKM B-2378 / K5).